The sequence spans 610 residues: Elongation factor 4 (610 aa).

The tr-type G domain occupies 13-195; that stretch reads SHIRNFSIVA…AIVRKLPAPK (183 aa). GTP contacts are provided by residues 25 to 30 and 142 to 145; these read DHGKST and NKID.

The protein belongs to the TRAFAC class translation factor GTPase superfamily. Classic translation factor GTPase family. LepA subfamily.

It localises to the cell inner membrane. The catalysed reaction is GTP + H2O = GDP + phosphate + H(+). Required for accurate and efficient protein synthesis under certain stress conditions. May act as a fidelity factor of the translation reaction, by catalyzing a one-codon backward translocation of tRNAs on improperly translocated ribosomes. Back-translocation proceeds from a post-translocation (POST) complex to a pre-translocation (PRE) complex, thus giving elongation factor G a second chance to translocate the tRNAs correctly. Binds to ribosomes in a GTP-dependent manner. This Rhizobium etli (strain CIAT 652) protein is Elongation factor 4.